A 79-amino-acid chain; its full sequence is Sulfur carrier protein TusA (79 aa).

The active-site Cysteine persulfide intermediate is the cysteine 17.

Belongs to the sulfur carrier protein TusA family.

It is found in the cytoplasm. Functionally, sulfur carrier protein which probably makes part of a sulfur-relay system. The sequence is that of Sulfur carrier protein TusA from Histophilus somni (strain 129Pt) (Haemophilus somnus).